The sequence spans 429 residues: Trigger factor (429 aa).

The PPIase FKBP-type domain occupies 161–246 (GDRLSIDFKG…INEIASPKEL (86 aa)).

This sequence belongs to the FKBP-type PPIase family. Tig subfamily.

The protein resides in the cytoplasm. It carries out the reaction [protein]-peptidylproline (omega=180) = [protein]-peptidylproline (omega=0). In terms of biological role, involved in protein export. Acts as a chaperone by maintaining the newly synthesized protein in an open conformation. Functions as a peptidyl-prolyl cis-trans isomerase. This is Trigger factor from Vesicomyosocius okutanii subsp. Calyptogena okutanii (strain HA).